The chain runs to 1347 residues: BTB/POZ domain-containing protein 1 (1347 aa).

ANK repeat units follow at residues 51–81 (YGRT…DVFV) and 86–115 (SGYT…SFRS). 4 RCC1 repeats span residues 148 to 198 (GNEL…DKIL), 215 to 264 (SQNV…ALTK), 265 to 322 (FGSI…AWTD), and 324 to 372 (DIYS…CLLQ). BTB domains are found at residues 619–698 (SDVT…LSPW) and 758–829 (MDTV…VELF). Disordered regions lie at residues 1006 to 1029 (SSNQ…NVVN), 1104 to 1139 (EKAD…SKQV), 1193 to 1237 (EGSS…PLSI), and 1286 to 1347 (GILK…RAVK). Basic and acidic residues predominate over residues 1013 to 1023 (LNKEDAEEKSP). Composition is skewed to polar residues over residues 1208–1237 (SNGS…PLSI) and 1297–1306 (NRKQGQASKQ). Basic residues predominate over residues 1336–1347 (TTHKKGKARAVK).

Interacts with cul3.

The protein operates within protein modification; protein ubiquitination. In terms of biological role, probable substrate-specific adapter of an E3 ubiquitin-protein ligase complex which mediates the ubiquitination and subsequent proteasomal degradation of target proteins. This is BTB/POZ domain-containing protein 1 (btb1) from Schizosaccharomyces pombe (strain 972 / ATCC 24843) (Fission yeast).